We begin with the raw amino-acid sequence, 129 residues long: Small ribosomal subunit protein bS6 (129 aa).

The tract at residues 103 to 129 (LKQKEERAERAPRREERAEAKPEAAAE) is disordered. Over residues 104-129 (KQKEERAERAPRREERAEAKPEAAAE) the composition is skewed to basic and acidic residues.

This sequence belongs to the bacterial ribosomal protein bS6 family.

Its function is as follows. Binds together with bS18 to 16S ribosomal RNA. This is Small ribosomal subunit protein bS6 from Vibrio campbellii (strain ATCC BAA-1116).